The chain runs to 142 residues: MADQVPVTTQLPPIKPEHEVPLDAGGSPVGNMGTNSNNNNELGDVFDRIKTHFPPAKVKKIMQTDEDIGKVSQATPVIAGRSLEFFIALLVKKSGEMARGQGTKRITAEILKKTILNDEKFDFLREGLCVEEGQTQPEEESA.

The segment covering 1-11 has biased composition (polar residues); sequence MADQVPVTTQL. The segment at 1-43 is disordered; that stretch reads MADQVPVTTQLPPIKPEHEVPLDAGGSPVGNMGTNSNNNNELG. S27 is subject to Phosphoserine. The Histone-fold domain maps to 29–137; the sequence is VGNMGTNSNN…LCVEEGQTQP (109 aa). The residue at position 141 (S141) is a Phosphoserine.

It belongs to the NC2 alpha/DRAP1 family. As to quaternary structure, component of the NC2 (negative cofactor 2) complex composed of BUR6 and NCB2. The NC2 complex associates with SPT15/TBP. Interacts with SPT15/TBP.

The protein resides in the nucleus. In terms of biological role, component of the NC2 complex which represses RNA polymerase II transcription through binding to SPT15/TBP and thereby inhibiting the assembly of the preinitiation complex. The NC2 complex may also mediate transcriptional activation from TATA-driven promoters through association with SPT15/TBP. This chain is Negative cofactor 2 complex subunit alpha (BUR6), found in Saccharomyces cerevisiae (strain ATCC 204508 / S288c) (Baker's yeast).